Consider the following 338-residue polypeptide: MDLAEYKGIYVIAEQFEGKLRDVSFELLGQARILADTIGDEVGAILIGKDVKPLAQELIAHGAHKVYVYDDPQLEHYNTTAYAKVICDFFHEEKPNVFLVGATNIGRDLGPRVANSLKTGLTADCTQLGVDDDKKTIVWTRPALGGNIMAEIICPDNRPQMGTVRPHVFKKPEADPSATGEVIEKKANLSDADFMTKFVELIKLGGEGVKIEDADVIVAGGRGMNSEEPFKTGILKECADVLGGAVGASRAAVDAGWIDALHQVGQTGKTVGPKIYIACAISGAIQPLAGMTGSDCIIAINKDEDAPIFKVCDYGIVGDVFKVLPLLTEAIKKQKGIA.

275–303 (IYIACAISGAIQPLAGMTGSDCIIAINKD) provides a ligand contact to FAD.

It belongs to the ETF alpha-subunit/FixB family. As to quaternary structure, heterodimer of an alpha and a beta subunit. Requires FAD as cofactor.

Functionally, the electron transfer flavoprotein serves as a specific electron acceptor for other dehydrogenases. It transfers the electrons to the main respiratory chain via ETF-ubiquinone oxidoreductase (ETF dehydrogenase). The chain is Electron transfer flavoprotein subunit alpha (etfA) from Megasphaera elsdenii.